The sequence spans 195 residues: Ephrin-A2 (195 aa).

Residues 1 to 16 (MELSLVVFTVVCWVSV) form the signal peptide. The 134-residue stretch at 24-157 (SDRHAVYWNS…KLKVYVKPTS (134 aa)) folds into the Ephrin RBD domain. N-linked (GlcNAc...) asparagine glycosylation occurs at Asn-32. Intrachain disulfides connect Cys-57–Cys-97 and Cys-85–Cys-146. Cys-174 carries GPI-anchor amidated cysteine lipidation. Residues 175 to 195 (GADGPCLAVLMLLLVFLLAGV) constitute a propeptide, removed in mature form.

Belongs to the ephrin family. In terms of assembly, binds to the receptor tyrosine kinases epha2, epha3, epha4 and epha5. Interacts with epha8; activates epha8. As to expression, widespread expression in the embryo.

It is found in the cell membrane. Functionally, cell surface GPI-bound ligand for Eph receptors, a family of receptor tyrosine kinases which are crucial for migration, repulsion and adhesion during neuronal, vascular and epithelial development. Binds promiscuously Eph receptors residing on adjacent cells, leading to contact-dependent bidirectional signaling into neighboring cells. The signaling pathway downstream of the receptor is referred to as forward signaling while the signaling pathway downstream of the ephrin ligand is referred to as reverse signaling. With the epha2 receptor may play a role in bone remodeling through regulation of osteoclastogenesis and osteoblastogenesis. This is Ephrin-A2 (efna2) from Danio rerio (Zebrafish).